A 106-amino-acid polypeptide reads, in one-letter code: MNDSEFHRLADALWLTIEERLDNWDGDSDIDCEINGGVLTISFENGSKIIINRQEPLHQVWLATKQGGYHFDLKGDEWICDRSGETFWDLLEQAATQQAGEKVSFR.

The protein belongs to the frataxin family.

In terms of biological role, involved in iron-sulfur (Fe-S) cluster assembly. May act as a regulator of Fe-S biogenesis. The polypeptide is Iron-sulfur cluster assembly protein CyaY (Salmonella heidelberg (strain SL476)).